Reading from the N-terminus, the 700-residue chain is Centrosomal protein of 63 kDa (700 aa).

At methionine 1 the chain carries N-acetylmethionine. Coiled coils occupy residues 73–283 (KEVG…ETFI) and 343–533 (LQAE…MCKK). A phosphoserine mark is found at serine 278, lysine 488, and leucine 492. A disordered region spans residues 570–603 (QYKTGHHSPRGQTLDSIDPVARGPSPLSSHISPG). Positions 593 to 603 (PSPLSSHISPG) are enriched in low complexity.

It belongs to the CEP63 family. Interacts with CEP152 and CDK1; these interactions recruit both ligands to centrosomes. Interacts with CDK2, CDK5RAP2, WDR62, CEP90, KIAA0753/moonraker and CCDC14. CEP63, CDK5RAP2, CEP152, WDR62 are proposed to form a stepwise assembled complex at the centrosome forming a ring near parental centrioles. Interacts with CCDC57; the interaction is required for their location to proximal end of centrioles. Interacts with FXR1; promoting its stabilization. Polyubiquitinated via 'Lys-48'-linked ubiquitin, leading to its degradation. Deubiquitinated by USP36, promoting its stabilization.

The protein localises to the cytoplasm. It is found in the cytoskeleton. It localises to the microtubule organizing center. The protein resides in the centrosome. Its subcellular location is the centriole. The protein localises to the centriolar satellite. In terms of biological role, required for normal spindle assembly. Plays a key role in mother-centriole-dependent centriole duplication; the function also seems to involve CEP152, CDK5RAP2 and WDR62 through a stepwise assembled complex at the centrosome that recruits CDK2 required for centriole duplication. Reported to be required for centrosomal recruitment of CEP152; however, this function has been questioned. Also recruits CDK1 to centrosomes. Plays a role in DNA damage response. Following DNA damage, such as double-strand breaks (DSBs), is removed from centrosomes; this leads to the inactivation of spindle assembly and delay in mitotic progression. Promotes stabilization of FXR1 protein by inhibiting FXR1 ubiquitination. In Mus musculus (Mouse), this protein is Centrosomal protein of 63 kDa.